The sequence spans 88 residues: Small ribosomal subunit protein bS20 (88 aa).

It belongs to the bacterial ribosomal protein bS20 family.

Functionally, binds directly to 16S ribosomal RNA. The sequence is that of Small ribosomal subunit protein bS20 from Heliobacterium modesticaldum (strain ATCC 51547 / Ice1).